We begin with the raw amino-acid sequence, 485 residues long: Glutamate--tRNA ligase (485 aa).

The short motif at 11-21 (PSPTGHLHIGN) is the 'HIGH' region element. The short motif at 252 to 256 (KLSKR) is the 'KMSKS' region element. K255 lines the ATP pocket.

The protein belongs to the class-I aminoacyl-tRNA synthetase family. Glutamate--tRNA ligase type 1 subfamily. Monomer.

Its subcellular location is the cytoplasm. The catalysed reaction is tRNA(Glu) + L-glutamate + ATP = L-glutamyl-tRNA(Glu) + AMP + diphosphate. Its function is as follows. Catalyzes the attachment of glutamate to tRNA(Glu) in a two-step reaction: glutamate is first activated by ATP to form Glu-AMP and then transferred to the acceptor end of tRNA(Glu). The polypeptide is Glutamate--tRNA ligase (Bacillus cereus (strain ATCC 10987 / NRS 248)).